The following is a 155-amino-acid chain: Endoribonuclease YbeY (155 aa).

Residues H120, H124, and H130 each coordinate Zn(2+).

The protein belongs to the endoribonuclease YbeY family. It depends on Zn(2+) as a cofactor.

The protein resides in the cytoplasm. Single strand-specific metallo-endoribonuclease involved in late-stage 70S ribosome quality control and in maturation of the 3' terminus of the 16S rRNA. The protein is Endoribonuclease YbeY of Staphylococcus aureus (strain MSSA476).